The following is a 301-amino-acid chain: Large ribosomal subunit protein uL18 (301 aa).

The protein belongs to the universal ribosomal protein uL18 family. As to quaternary structure, component of the large ribosomal subunit (LSU). Mature N.crassa ribosomes consist of a small (40S) and a large (60S) subunit. The 40S small subunit contains 1 molecule of ribosomal RNA (18S rRNA) and at least 32 different proteins. The large 60S subunit contains 3 rRNA molecules (26S, 5.8S and 5S rRNA) and at least 42 different proteins.

The protein resides in the cytoplasm. In terms of biological role, component of the ribosome, a large ribonucleoprotein complex responsible for the synthesis of proteins in the cell. The small ribosomal subunit (SSU) binds messenger RNAs (mRNAs) and translates the encoded message by selecting cognate aminoacyl-transfer RNA (tRNA) molecules. The large subunit (LSU) contains the ribosomal catalytic site termed the peptidyl transferase center (PTC), which catalyzes the formation of peptide bonds, thereby polymerizing the amino acids delivered by tRNAs into a polypeptide chain. The nascent polypeptides leave the ribosome through a tunnel in the LSU and interact with protein factors that function in enzymatic processing, targeting, and the membrane insertion of nascent chains at the exit of the ribosomal tunnel. This chain is Large ribosomal subunit protein uL18 (rpl-5), found in Neurospora crassa (strain ATCC 24698 / 74-OR23-1A / CBS 708.71 / DSM 1257 / FGSC 987).